The sequence spans 290 residues: Ribosomal RNA small subunit methyltransferase A (290 aa).

N27, L29, G54, E75, D100, and N125 together coordinate S-adenosyl-L-methionine.

Belongs to the class I-like SAM-binding methyltransferase superfamily. rRNA adenine N(6)-methyltransferase family. RsmA subfamily.

The protein resides in the cytoplasm. It catalyses the reaction adenosine(1518)/adenosine(1519) in 16S rRNA + 4 S-adenosyl-L-methionine = N(6)-dimethyladenosine(1518)/N(6)-dimethyladenosine(1519) in 16S rRNA + 4 S-adenosyl-L-homocysteine + 4 H(+). Functionally, specifically dimethylates two adjacent adenosines (A1518 and A1519) in the loop of a conserved hairpin near the 3'-end of 16S rRNA in the 30S particle. May play a critical role in biogenesis of 30S subunits. The polypeptide is Ribosomal RNA small subunit methyltransferase A (Streptococcus thermophilus (strain ATCC BAA-491 / LMD-9)).